Reading from the N-terminus, the 984-residue chain is Detocs histidine-protein kinase DtcA (984 aa).

Phosphohistidine; by autocatalysis is present on His645.

Autophosphorylated.

The catalysed reaction is ATP + protein L-histidine = ADP + protein N-phospho-L-histidine.. Sensor-kinase member of the two-component regulatory system Detocs that confers resistance to bacteriophage. When the system (DtcA-DtcB-DtcC) is expressed in a susceptible E.coli (strain MG1655) it confers resistance to bacteriophages T2, T4, T5, T6 and SECphi27. Detocs inhibits T5 infection leading to growth arrest but not complete cell lysis, during SECphi27 infection leads to cell lysis. DtcA (this subunit) probably autophosphorylates upon sensing viral infection, and subsequently transfers the phosphate signal to DtcC which activates it, leading to an antiviral defense; DtcB may scavenge phosphorylation signals from accidental activation of DtcA. The chain is Detocs histidine-protein kinase DtcA from Vibrio alginolyticus.